Consider the following 365-residue polypeptide: Ribosomal RNA large subunit methyltransferase F (365 aa).

Low complexity-rich tracts occupy residues 1–18 and 30–42; these read MPKP…SPAG and AKLK…AASK. A disordered region spans residues 1 to 50; the sequence is MPKPAIKTAAKPATSPAGKRAKPNTPQSVAKLKASTAKAASKPKAKLGEK.

The protein belongs to the methyltransferase superfamily. METTL16/RlmF family.

Its subcellular location is the cytoplasm. The enzyme catalyses adenosine(1618) in 23S rRNA + S-adenosyl-L-methionine = N(6)-methyladenosine(1618) in 23S rRNA + S-adenosyl-L-homocysteine + H(+). Its function is as follows. Specifically methylates the adenine in position 1618 of 23S rRNA. This is Ribosomal RNA large subunit methyltransferase F from Shewanella oneidensis (strain ATCC 700550 / JCM 31522 / CIP 106686 / LMG 19005 / NCIMB 14063 / MR-1).